Reading from the N-terminus, the 416-residue chain is MAVLYFFREPETVFDCAAFICILQFLMGCNGFGIRRSTFRISWASRIYSMSVAIAAFCCLFGSLSVLLAEEDIRERLAKADNLVLSISALELLMSTLVFGVTVISLQVFARRHLGIYQRLAALDARLMSDFGANLNYRKMLRKNIAVLGIVTTIYLMAINSAAVQVASGHRALFLLFALCYTIVTGGPHFTGYVHMTLAEMLGIRFRLLQQLLQPEFLNWRFPQLHVQELRIRQVVSMIQELHYLIQEINRVYALSLWAAMAHDLAMSTSELYILFGQSVGIGQQNEEENGSCYRMLGYLALVMIPPLYKLLIAPFYCDRTIYEARRCLRLVEKLDDWFPQKSSLRPLVESLMSWRIQAKIQFTSGLDVVLSRKVIGLFTSILVNYLLILIQFAMTQKMGEQIEQQKIALQEWIGF.

Topologically, residues 1 to 13 are cytoplasmic; the sequence is MAVLYFFREPETV. The helical transmembrane segment at 14 to 34 threads the bilayer; it reads FDCAAFICILQFLMGCNGFGI. The Extracellular segment spans residues 35 to 48; that stretch reads RRSTFRISWASRIY. Residues 49–69 form a helical membrane-spanning segment; sequence SMSVAIAAFCCLFGSLSVLLA. The Cytoplasmic segment spans residues 70–83; sequence EEDIRERLAKADNL. Residues 84–104 form a helical membrane-spanning segment; it reads VLSISALELLMSTLVFGVTVI. Over 105–143 the chain is Extracellular; that stretch reads SLQVFARRHLGIYQRLAALDARLMSDFGANLNYRKMLRK. The helical transmembrane segment at 144-164 threads the bilayer; the sequence is NIAVLGIVTTIYLMAINSAAV. The Cytoplasmic segment spans residues 165–171; that stretch reads QVASGHR. A helical transmembrane segment spans residues 172-192; that stretch reads ALFLLFALCYTIVTGGPHFTG. Topologically, residues 193–295 are extracellular; that stretch reads YVHMTLAEML…NEEENGSCYR (103 aa). N290 carries N-linked (GlcNAc...) asparagine glycosylation. Residues 296–316 form a helical membrane-spanning segment; the sequence is MLGYLALVMIPPLYKLLIAPF. The Cytoplasmic portion of the chain corresponds to 317 to 374; that stretch reads YCDRTIYEARRCLRLVEKLDDWFPQKSSLRPLVESLMSWRIQAKIQFTSGLDVVLSRK. A helical membrane pass occupies residues 375–395; it reads VIGLFTSILVNYLLILIQFAM. The Extracellular segment spans residues 396–416; it reads TQKMGEQIEQQKIALQEWIGF.

The protein belongs to the insect chemoreceptor superfamily. Gustatory receptor (GR) family. Gr57a subfamily. In terms of tissue distribution, in larvae, is expressed in neurons of the terminal external chemosensory organ as well as in the dorsal pharyngeal sense organ.

The protein localises to the cell membrane. Its function is as follows. Probable gustatory receptor which mediates acceptance or avoidance behavior, depending on its substrates. This chain is Putative gustatory receptor 57a (Gr57a), found in Drosophila melanogaster (Fruit fly).